We begin with the raw amino-acid sequence, 288 residues long: ATP synthase subunit a (288 aa).

6 helical membrane passes run 47 to 67 (LDSM…FWMV), 104 to 124 (LIAP…LMDL), 157 to 177 (DPNI…FYSI), 199 to 219 (PIVQ…TLIA), 237 to 257 (LIFI…SVPW), and 258 to 278 (AIFH…LTIV).

Belongs to the ATPase A chain family. As to quaternary structure, F-type ATPases have 2 components, CF(1) - the catalytic core - and CF(0) - the membrane proton channel. CF(1) has five subunits: alpha(3), beta(3), gamma(1), delta(1), epsilon(1). CF(0) has three main subunits: a(1), b(2) and c(9-12). The alpha and beta chains form an alternating ring which encloses part of the gamma chain. CF(1) is attached to CF(0) by a central stalk formed by the gamma and epsilon chains, while a peripheral stalk is formed by the delta and b chains.

It localises to the cell inner membrane. Functionally, key component of the proton channel; it plays a direct role in the translocation of protons across the membrane. The chain is ATP synthase subunit a from Psychrobacter cryohalolentis (strain ATCC BAA-1226 / DSM 17306 / VKM B-2378 / K5).